We begin with the raw amino-acid sequence, 317 residues long: Petrobactin-binding protein YclQ (317 aa).

Positions 1 to 19 are cleaved as a signal peptide; it reads MKKFALLFIALVTAVVISA. Cys20 carries the N-palmitoyl cysteine lipid modification. Residue Cys20 is the site of S-diacylglycerol cysteine attachment. The Fe/B12 periplasmic-binding domain occupies 56–317; that stretch reads KVVVFDFGSL…IKEVKDGLEK (262 aa).

The protein belongs to the bacterial solute-binding protein 8 family. In terms of assembly, the complex is composed of two ATP-binding proteins (YclP), two transmembrane proteins (YclN and YclO) and a solute-binding protein (YclQ). Interacts with FloT.

Its subcellular location is the cell membrane. The protein localises to the membrane raft. Part of the ABC transporter complex YclNOPQ involved in uptake of ferric-petrobactin. Petrobactin is a photoreactive 3,4-catecholate siderophore produced by many members of the B.cereus group, including B.anthracis. Binds selectively iron-free and ferric petrobactin and the petrobactin precursor 3,4-dihydroxybenzoic acid (3,4-DHB). The polypeptide is Petrobactin-binding protein YclQ (yclQ) (Bacillus subtilis (strain 168)).